The chain runs to 965 residues: Chondroitin synthase (965 aa).

The galactosaminyltransferase; A1 domain stretch occupies residues 132–418 (FTWYKNRKKS…IVKEKVPYIY (287 aa)). UDP-N-acetyl-alpha-D-galactosamine contacts are provided by residues Pro-158, Arg-162, Asp-189, Tyr-218, Arg-224, and 240 to 241 (DC). Asp-242 provides a ligand contact to Mn(2+). A UDP-N-acetyl-alpha-D-galactosamine-binding site is contributed by 362–363 (ED). His-387 contacts Mn(2+). The tract at residues 419–683 (RKLLPIEDSH…ESRKYIFNKT (265 aa)) is glucuronosyltransferase; A2 domain. UDP-alpha-D-glucuronate contacts are provided by residues Tyr-442, Asp-470, and 518-521 (QLDS). Asp-522 is a Mn(2+) binding site. UDP-alpha-D-glucuronate is bound by residues His-582 and 604-605 (AV). His-632 lines the Mn(2+) pocket.

It belongs to the glycosyltransferase 2 family. CS/HAS subfamily. Mn(2+) is required as a cofactor.

It is found in the cell membrane. The catalysed reaction is 3-O-(beta-D-GlcA-(1-&gt;3)-beta-D-GalNAc-(1-&gt;4)-beta-D-GlcA-(1-&gt;3)-beta-D-Gal-(1-&gt;3)-beta-D-Gal-(1-&gt;4)-beta-D-Xyl)-L-seryl-[protein] + UDP-N-acetyl-alpha-D-galactosamine = 3-O-(beta-D-GalNAc-(1-&gt;4)-beta-D-GlcA-(1-&gt;3)-beta-D-GalNAc-(1-&gt;4)-beta-D-GlcA-(1-&gt;3)-beta-D-Gal-(1-&gt;3)-beta-D-Gal-(1-&gt;4)-beta-D-Xyl)-L-seryl-[protein] + UDP + H(+). It catalyses the reaction 3-O-{beta-D-GlcA-(1-&gt;3)-[beta-D-GalNAc-(1-&gt;4)-beta-D-GlcA-(1-&gt;3)](n)-beta-D-GalNAc-(1-&gt;4)-beta-D-GlcA-(1-&gt;3)-beta-D-Gal-(1-&gt;3)-beta-D-Gal-(1-&gt;4)-beta-D-Xyl}-L-seryl-[protein] + UDP-N-acetyl-alpha-D-galactosamine = 3-O-{[beta-D-GalNAc-(1-&gt;4)-beta-D-GlcA-(1-&gt;3)](n+1)-beta-D-GalNAc-(1-&gt;4)-beta-D-GlcA-(1-&gt;3)-beta-D-Gal-(1-&gt;3)-beta-D-Gal-(1-&gt;4)-beta-D-Xyl}-L-seryl-[protein] + UDP + H(+). The enzyme catalyses 3-O-(beta-D-GalNAc-(1-&gt;4)-beta-D-GlcA-(1-&gt;3)-beta-D-Gal-(1-&gt;3)-beta-D-Gal-(1-&gt;4)-beta-D-Xyl)-L-seryl-[protein] + UDP-alpha-D-glucuronate = 3-O-(beta-D-GlcA-(1-&gt;3)-beta-D-GalNAc-(1-&gt;4)-beta-D-GlcA-(1-&gt;3)-beta-D-Gal-(1-&gt;3)-beta-D-Gal-(1-&gt;4)-beta-D-Xyl)-L-seryl-[protein] + UDP + H(+). It carries out the reaction 3-O-{[beta-D-GalNAc-(1-&gt;4)-beta-D-GlcA-(1-&gt;3)](n)-beta-D-GalNAc-(1-&gt;4)-beta-D-GlcA-(1-&gt;3)-beta-D-Gal-(1-&gt;3)-beta-D-Gal-(1-&gt;4)-beta-D-Xyl}-L-seryl-[protein] + UDP-alpha-D-glucuronate = 3-O-{beta-D-GlcA-(1-&gt;3)-[beta-D-GalNAc-(1-&gt;4)-beta-D-GlcA-(1-&gt;3)](n)-beta-D-GalNAc-(1-&gt;4)-beta-D-GlcA-(1-&gt;3)-beta-D-Gal-(1-&gt;3)-beta-D-Gal-(1-&gt;4)-beta-D-Xyl}-L-seryl-[protein] + UDP + H(+). Its function is as follows. Glycosyltransferase that catalyzes elongation of chondroitin, a polysaccharide composed of a repeating disaccharide of N-acetylgalactosamine (GalNAc) and glucuronic acid (GlcUA) units, by alternatively transferring the GlcUA and GalNAc moiety from UDP-GlcUA and UDP-GalNAc to the non-reducing ends of the chondroitin chain. Each chondroitin unit has the composition beta-(1-&gt;4)-GlcUA-beta-(1-&gt;3)-GalNAc. The sequence is that of Chondroitin synthase (fcbD) from Pasteurella multocida (strain Pm70).